A 499-amino-acid chain; its full sequence is Glutamyl-tRNA(Gln) amidotransferase subunit A (499 aa).

Residues lysine 75 and serine 150 each act as charge relay system in the active site. Catalysis depends on serine 174, which acts as the Acyl-ester intermediate.

This sequence belongs to the amidase family. GatA subfamily. Heterotrimer of A, B and C subunits.

It catalyses the reaction L-glutamyl-tRNA(Gln) + L-glutamine + ATP + H2O = L-glutaminyl-tRNA(Gln) + L-glutamate + ADP + phosphate + H(+). Allows the formation of correctly charged Gln-tRNA(Gln) through the transamidation of misacylated Glu-tRNA(Gln) in organisms which lack glutaminyl-tRNA synthetase. The reaction takes place in the presence of glutamine and ATP through an activated gamma-phospho-Glu-tRNA(Gln). The sequence is that of Glutamyl-tRNA(Gln) amidotransferase subunit A from Ralstonia pickettii (strain 12J).